Here is a 151-residue protein sequence, read N- to C-terminus: uncharacterized protein (151 aa).

This is an uncharacterized protein from Mycoplasma genitalium (strain ATCC 33530 / DSM 19775 / NCTC 10195 / G37) (Mycoplasmoides genitalium).